A 462-amino-acid polypeptide reads, in one-letter code: Cysteine--tRNA ligase (462 aa).

Position 28 (C28) interacts with Zn(2+). The short motif at 30-40 (MTVYDYCHIGH) is the 'HIGH' region element. Residues C209, H234, and E238 each coordinate Zn(2+). The 'KMSKS' region signature appears at 266 to 270 (KMSKS). K269 contacts ATP.

Belongs to the class-I aminoacyl-tRNA synthetase family. Monomer. The cofactor is Zn(2+).

The protein resides in the cytoplasm. It catalyses the reaction tRNA(Cys) + L-cysteine + ATP = L-cysteinyl-tRNA(Cys) + AMP + diphosphate. The polypeptide is Cysteine--tRNA ligase (Pseudomonas fluorescens (strain SBW25)).